The sequence spans 196 residues: Recombination protein RecR (196 aa).

The C4-type zinc-finger motif lies at 55–70; sequence CELCGNLESESPCSIC. The region spanning 78 to 173 is the Toprim domain; the sequence is DIVCVVEEIT…KLSFLAHGIP (96 aa).

Belongs to the RecR family.

Its function is as follows. May play a role in DNA repair. It seems to be involved in an RecBC-independent recombinational process of DNA repair. It may act with RecF and RecO. This is Recombination protein RecR from Neorickettsia sennetsu (strain ATCC VR-367 / Miyayama) (Ehrlichia sennetsu).